We begin with the raw amino-acid sequence, 798 residues long: Integrin beta-1 (798 aa).

Residues 1–20 (MNLQLIFWIGLISSVCYVFG) form the signal peptide. Topologically, residues 21–728 (QADENRCLKA…ETPECPTGPD (708 aa)) are extracellular. In terms of domain architecture, PSI spans 26–76 (RCLKANAKSCGECIQAGPNCGWCTNSTFLQEGMPTSARCDDLEALRKKGCH). 28 disulfides stabilise this stretch: C27–C45, C35–C464, C38–C64, C48–C75, C207–C213, C261–C301, C401–C415, C435–C462, C466–C486, C477–C489, C491–C500, C502–C533, C516–C531, C525–C536, C538–C553, C555–C576, C560–C574, C568–C579, C581–C590, C592–C615, C599–C613, C607–C618, C620–C630, C633–C636, C640–C691, C646–C665, C649–C661, and C699–C723. N-linked (GlcNAc...) asparagine glycosylation occurs at N50. Basic and acidic residues predominate over residues 75–84 (CHPDDIENPR). A disordered region spans residues 75–107 (CHPDDIENPRGSKNIKKNKNVTNRSKGTAEKLQ). Residues N94 and N97 are each glycosylated (N-linked (GlcNAc...) asparagine). The VWFA domain maps to 140-378 (DYPIDLYYLM…QLIIDAYNSL (239 aa)). S152 and S154 together coordinate Mg(2+). 4 residues coordinate Ca(2+): S154, D157, D158, and E189. The interval 207–213 (CTSEQNC) is CX3CL1-binding. N-linked (GlcNAc...) asparagine glycosylation occurs at N212. Ca(2+) is bound by residues N244, D246, P248, and E249. E249 is a binding site for Mg(2+). An N-linked (GlcNAc...) asparagine glycan is attached at N269. The tract at residues 295 to 314 (LPNDGHCHLENDVYTMSHYY) is CX3CL1-binding. Residue A362 coordinates Ca(2+). Residues N363, N406, and N417 are each glycosylated (N-linked (GlcNAc...) asparagine). Residues 383–465 (ILENSKLPEG…IILQFICECE (83 aa)) form an interaction with TMEM182 region. 4 consecutive I-EGF domains span residues 466–501 (CQSE…RHCE), 502–554 (CSTD…KFCE), 555–591 (CDNF…SACD), and 592–631 (CSLD…PTCE). N-linked (GlcNAc...) asparagine glycosylation occurs at N481. N520 carries N-linked (GlcNAc...) asparagine glycosylation. A glycan (N-linked (GlcNAc...) asparagine) is linked at N584. A glycan (N-linked (GlcNAc...) asparagine) is linked at N669. The helical transmembrane segment at 729–749 (IIPIVAGVVAGIVLIGLALLL) threads the bilayer. Topologically, residues 750-798 (IWKLLMIIHDRREFAKFEKEKMNAKWDTGENPIYKSAVTTVVNPKYEGK) are cytoplasmic. Positions 762-767 (EFAKFE) are signal for sorting from recycling endosomes; interaction with ACAP1. Position 777 is a phosphothreonine (T777). Y783 carries the post-translational modification Phosphotyrosine. Position 785 is a phosphoserine (S785). Positions 785–792 (SAVTTVVN) are interaction with ITGB1BP1. At T789 the chain carries Phosphothreonine. Position 794 is an N6-acetyllysine; alternate (K794). Residue K794 forms a Glycyl lysine isopeptide (Lys-Gly) (interchain with G-Cter in SUMO1); alternate linkage.

Belongs to the integrin beta chain family. In terms of assembly, interacts with seprase FAP (seprase); the interaction occurs at the cell surface of invadopodia membrane in a collagen-dependent manner. Heterodimer of an alpha and a beta subunit. Beta-1 associates with either alpha-1, alpha-2, alpha-3, alpha-4, alpha-5, alpha-6, alpha-7, alpha-8, alpha-9, alpha-10, alpha-11 or alpha-V. ITGA6:ITGB1 is found in a complex with CD9; interaction takes place in oocytes and is involved in sperm-egg fusion. Binds LGALS3BP and NMRK2, when associated with alpha-7, but not with alpha-5. Interacts with FLNA, FLNB, FLNC and RANBP9. Interacts with KRT1 in the presence of RACK1 and SRC. Interacts with JAML; integrin alpha-4/beta-1 may regulate leukocyte to endothelial cells adhesion by controlling JAML homodimerization. Interacts with RAB21. Interacts (via the cytoplasmic region) with RAB25 (via the hypervariable C-terminal region). Interacts with MYO10. Interacts with ITGB1BP1 (via C-terminal region); the interaction is a prerequisite for focal adhesion disassembly. Interacts with TLN1; the interaction is prevented by competitive binding of ITGB1BP1. Interacts with ACAP1; required for ITGB1 recycling. Interacts with ASAP3. Interacts with FERMT2; the interaction is inhibited in presence of ITGB1BP1. Interacts with DAB2. Interacts with FGR and HCK. Interacts with alpha-7A and alpha-7B in adult skeletal muscle. Interacts with alpha-7B in cardiomyocytes of adult heart. Interacts with EMP2; the interaction may be direct or indirect and ITGB1 has a heterodimer form. ITGA5:ITGB1 interacts with CCN3. ITGA4:ITGB1 is found in a ternary complex with CX3CR1 and CX3CL1. ITGA5:ITGB1 interacts with FBN1. ITGA5:ITGB1 interacts with IL1B. Interacts with MDK. ITGA4:ITGB1 interacts with MDK; this interaction mediates MDK-induced osteoblast cells migration through PXN phosphorylation. ITGA6:ITGB1 interacts with MDK; this interaction mediates MDK-induced neurite-outgrowth. ITGA5:ITGB1 interacts with ACE2. Interacts with TMEM182 and LAMB1. Interacts with tensin TNS3; TNS3 also interacts with PEAK1, thus acting as an adapter molecule to bridge the association of PEAK1 with ITGB1. Interacts with tensin TNS4; the interaction displaces tensin TNS3 from the ITGB1 cytoplasmic tail and promotes ITGB1 stability. Integrin ITGA9:ITGB1 interacts with SPP1/OPN (via N-terminus). Integrin ITGA9:ITGB1 interacts with TNC/TNFN3 (via the 3rd Fibronectin type-III domain). Integrins ITGA4:ITGB1 and ITGA9:ITGB1 interact with SVEP1 (via Sushi domain 21); thereby inhibit Ca(2+) intracellular signaling and as a result repress vasocontraction. ITGA4:ITGB1 and ITGA5:ITGB1 interacts with SELP. Interacts with CD248. ITGA5:ITGB1 interacts with IGFBP1. ITGA4:ITGB1 interacts with BCAM. Interacts with ADGRG6. In terms of tissue distribution, expressed in the spleen, thymus, alveolar macrophages, bone marrow, liver and kidney.

Its subcellular location is the cell membrane. It localises to the cell projection. The protein localises to the invadopodium membrane. It is found in the ruffle membrane. The protein resides in the recycling endosome. Its subcellular location is the melanosome. It localises to the lamellipodium. The protein localises to the ruffle. It is found in the cell junction. The protein resides in the focal adhesion. In terms of biological role, integrins alpha-1/beta-1, alpha-2/beta-1, alpha-10/beta-1 and alpha-11/beta-1 are receptors for collagen. Integrins alpha-1/beta-1 and alpha-2/beta-2 recognize the proline-hydroxylated sequence G-F-P-G-E-R in collagen. Integrins alpha-2/beta-1, alpha-3/beta-1, alpha-4/beta-1, alpha-5/beta-1, alpha-8/beta-1, alpha-10/beta-1, alpha-11/beta-1 and alpha-V/beta-1 are receptors for fibronectin. Alpha-4/beta-1 recognizes one or more domains within the alternatively spliced CS-1 and CS-5 regions of fibronectin. Integrin alpha-5/beta-1 is a receptor for fibrinogen. Integrin alpha-1/beta-1, alpha-2/beta-1, alpha-6/beta-1 and alpha-7/beta-1 are receptors for lamimin. Integrin alpha-6/beta-1 (ITGA6:ITGB1) is present in oocytes and is involved in sperm-egg fusion. Integrin alpha-4/beta-1 is a receptor for VCAM1 and recognizes the sequence Q-I-D-S in VCAM1. Integrin alpha-9/beta-1 is a receptor for VCAM1, cytotactin and osteopontin. It recognizes the sequence A-E-I-D-G-I-E-L in cytotactin. Integrin alpha-3/beta-1 is a receptor for epiligrin, thrombospondin and CSPG4. Integrin alpha-3/beta-1 provides a docking site for FAP (seprase) at invadopodia plasma membranes in a collagen-dependent manner and hence may participate in the adhesion, formation of invadopodia and matrix degradation processes, promoting cell invasion. Alpha-3/beta-1 may mediate with LGALS3 the stimulation by CSPG4 of endothelial cells migration. Integrin alpha-V/beta-1 is a receptor for vitronectin. Beta-1 integrins recognize the sequence R-G-D in a wide array of ligands. When associated with alpha-7/beta-1 integrin, regulates cell adhesion and laminin matrix deposition. Involved in promoting endothelial cell motility and angiogenesis. Involved in osteoblast compaction through the fibronectin fibrillogenesis cell-mediated matrix assembly process and the formation of mineralized bone nodules. May be involved in up-regulation of the activity of kinases such as PKC via binding to KRT1. Together with KRT1 and RACK1, serves as a platform for SRC activation or inactivation. Plays a mechanistic adhesive role during telophase, required for the successful completion of cytokinesis. ITGA4:ITGB1 binds to fractalkine (CX3CL1) and may act as its coreceptor in CX3CR1-dependent fractalkine signaling. ITGA4:ITGB1 and ITGA5:ITGB1 bind to PLA2G2A via a site (site 2) which is distinct from the classical ligand-binding site (site 1) and this induces integrin conformational changes and enhanced ligand binding to site 1. ITGA5:ITGB1 acts as a receptor for fibrillin-1 (FBN1) and mediates R-G-D-dependent cell adhesion to FBN1. ITGA5:ITGB1 acts as a receptor for fibronectin FN1 and mediates R-G-D-dependent cell adhesion to FN1. ITGA5:ITGB1 is a receptor for IL1B and binding is essential for IL1B signaling. ITGA5:ITGB3 is a receptor for soluble CD40LG and is required for CD40/CD40LG signaling. Plays an important role in myoblast differentiation and fusion during skeletal myogenesis. ITGA9:ITGB1 may play a crucial role in SVEP1/polydom-mediated myoblast cell adhesion. Integrins ITGA9:ITGB1 and ITGA4:ITGB1 repress PRKCA-mediated L-type voltage-gated channel Ca(2+) influx and ROCK-mediated calcium sensitivity in vascular smooth muscle cells via their interaction with SVEP1, thereby inhibit vasocontraction. The sequence is that of Integrin beta-1 (ITGB1) from Sus scrofa (Pig).